The chain runs to 141 residues: Holo-[acyl-carrier-protein] synthase (141 aa).

Asp7 and Glu57 together coordinate Mg(2+).

This sequence belongs to the P-Pant transferase superfamily. AcpS family. Requires Mg(2+) as cofactor.

It is found in the cytoplasm. It catalyses the reaction apo-[ACP] + CoA = holo-[ACP] + adenosine 3',5'-bisphosphate + H(+). In terms of biological role, transfers the 4'-phosphopantetheine moiety from coenzyme A to a Ser of acyl-carrier-protein. In Corynebacterium efficiens (strain DSM 44549 / YS-314 / AJ 12310 / JCM 11189 / NBRC 100395), this protein is Holo-[acyl-carrier-protein] synthase.